The chain runs to 821 residues: Palmitoyltransferase AKR1 (821 aa).

Residues 1-118 form a disordered region; it reads MVDKDANNEL…KDTASRKSMD (118 aa). Topologically, residues 1–400 are cytoplasmic; that stretch reads MVDKDANNEL…TIYLNPKIGK (400 aa). Residues 93-117 show a composition bias toward basic and acidic residues; that stretch reads IQDESVNDKTSEPDENKDTASRKSM. ANK repeat units follow at residues 142 to 172, 176 to 205, 213 to 243, 247 to 277, 289 to 318, and 322 to 351; these read PSLH…KAND, DGIT…SKAD, LKAS…DPTL, QSYN…STST, CDRT…DVSK, and NLFI…NIFA. The chain crosses the membrane as a helical span at residues 401-421; that stretch reads LVTFFTPYIILPIMFQVCSFY. Position 422 (Asn-422) is a topological domain, lumenal. A helical membrane pass occupies residues 423–443; it reads GFVIPKLFFSVVLFAGSIYIL. Residues 444-463 lie on the Cytoplasmic side of the membrane; that stretch reads QKLVIPTYLAEEKAIPKSPL. Residues 464–484 form a helical membrane-spanning segment; it reads LAGIFSGTAFWCIVTWAFNII. Topologically, residues 485 to 494 are lumenal; it reads PTLLFKKFIS. A helical transmembrane segment spans residues 495 to 515; sequence NLVLSAFIYLFVWSFFKAMFI. Residues 516 to 589 lie on the Cytoplasmic side of the membrane; that stretch reads NPGYVPVPSD…YNDIGVRNHK (74 aa). The DHHC domain occupies 546–596; it reads NFCVNTFVRKPLRSKYSRFNKKLIARFDHYCPWVYNDIGVRNHKLFVVFVY. The active-site S-palmitoyl cysteine intermediate is Cys-576. The chain crosses the membrane as a helical span at residues 590–610; that stretch reads LFVVFVYSLNLAVLLFTHLSI. The Lumenal segment spans residues 611–650; the sequence is KLFKNTEKMSGYDSDDESQKCWLLSDELCVGYKSHHFQFN. A helical membrane pass occupies residues 651-671; the sequence is LMLWCLIQYIWIAFLCLVQTF. The Cytoplasmic segment spans residues 672–821; sequence QILKGLTTWE…YPPKLADVDA (150 aa).

The protein belongs to the DHHC palmitoyltransferase family. AKR/ZDHHC17 subfamily.

It is found in the early endosome membrane. The protein resides in the golgi apparatus membrane. It catalyses the reaction L-cysteinyl-[protein] + hexadecanoyl-CoA = S-hexadecanoyl-L-cysteinyl-[protein] + CoA. Its function is as follows. Palmitoyltransferase specific for casein kinase 1. This is Palmitoyltransferase AKR1 (AKR1) from Debaryomyces hansenii (strain ATCC 36239 / CBS 767 / BCRC 21394 / JCM 1990 / NBRC 0083 / IGC 2968) (Yeast).